The following is a 228-amino-acid chain: Ribose-5-phosphate isomerase A (228 aa).

Residues 27-30 (TGTT), 86-89 (DGAD), and 100-103 (KGGG) contribute to the substrate site. The active-site Proton acceptor is the Glu109. Residue Lys127 coordinates substrate.

This sequence belongs to the ribose 5-phosphate isomerase family. In terms of assembly, homodimer.

The catalysed reaction is aldehydo-D-ribose 5-phosphate = D-ribulose 5-phosphate. Its pathway is carbohydrate degradation; pentose phosphate pathway; D-ribose 5-phosphate from D-ribulose 5-phosphate (non-oxidative stage): step 1/1. Functionally, catalyzes the reversible conversion of ribose-5-phosphate to ribulose 5-phosphate. This chain is Ribose-5-phosphate isomerase A, found in Borrelia hermsii (strain HS1 / DAH).